Consider the following 130-residue polypeptide: Methylglyoxal synthase (130 aa).

Positions 1-130 (MSKPRIALIA…DLARNMQDVC (130 aa)) constitute an MGS-like domain. Residues His11, Lys15, 37–40 (TGTT), and 57–58 (SG) each bind substrate. Catalysis depends on Asp63, which acts as the Proton donor/acceptor. His90 contacts substrate.

Belongs to the methylglyoxal synthase family.

The enzyme catalyses dihydroxyacetone phosphate = methylglyoxal + phosphate. Catalyzes the formation of methylglyoxal from dihydroxyacetone phosphate. The sequence is that of Methylglyoxal synthase from Burkholderia lata (strain ATCC 17760 / DSM 23089 / LMG 22485 / NCIMB 9086 / R18194 / 383).